The sequence spans 429 residues: Cell wall protein ECM33 (429 aa).

The signal sequence occupies residues 1–19 (MQFKNALTATAILSASALA). Asn-21, Asn-56, Asn-82, Asn-196, Asn-209, Asn-227, Asn-234, Asn-241, Asn-267, Asn-279, Asn-304, and Asn-328 each carry an N-linked (GlcNAc...) asparagine glycan. Residue Ser-339 is modified to Phosphoserine. Low complexity predominate over residues 361–401 (LSSTSTESSKSSATSSASSSGDASNAQANVSASASSSSSSS). The segment at 361–410 (LSSTSTESSKSSATSSASSSGDASNAQANVSASASSSSSSSKKSKGAAPE) is disordered. A glycan (N-linked (GlcNAc...) asparagine) is linked at Asn-389. Gly-406 carries GPI-anchor amidated glycine lipidation. A propeptide spans 407–429 (AAPELVPATSFMGVVAAVGVALL) (removed in mature form).

This sequence belongs to the SPS2 family. Post-translationally, the GPI-anchor is attached to the protein in the endoplasmic reticulum and serves to target the protein to the cell surface. There, the glucosamine-inositol phospholipid moiety is cleaved off and the GPI-modified mannoprotein is covalently attached via its lipidless GPI glycan remnant to the 1,6-beta-glucan of the outer cell wall layer. In terms of processing, extensively N-glycosylated.

The protein resides in the cell membrane. The protein localises to the secreted. Its subcellular location is the cell wall. Functionally, required for proper cell wall integrity and for the correct assembly of the mannoprotein outer layer of the cell wall. Important for apical bud growth. This chain is Cell wall protein ECM33 (ECM33), found in Saccharomyces cerevisiae (strain ATCC 204508 / S288c) (Baker's yeast).